Here is a 738-residue protein sequence, read N- to C-terminus: Flagellar radial spoke protein 2 (738 aa).

R104 is modified (asymmetric dimethylarginine). Acidic residues-rich tracts occupy residues 134 to 153 and 161 to 182; these read PDWV…EDEA and EGEE…DGEG. The disordered stretch occupies residues 134–189; sequence PDWVAPEDDEAAAVETEDEAAGGAALAEGEEPPPEPEPEPEAAPEDGEGDAPAPKI. An Asymmetric dimethylarginine modification is found at R260. The segment at 357-426 is disordered; that stretch reads AAAEAAAAAP…PPKPKKKKKV (70 aa). The span at 371 to 415 shows a compositional bias: acidic residues; that stretch reads EGEEGEGEAPPAEEEPPAEEEAEEEEEEAEEGAEEGAEEGEEGEE. An asymmetric dimethylarginine mark is found at R453, R538, and R615. Residues 674-738 form a disordered region; it reads AEAGEGEAVA…SSEESKAAAE (65 aa). Residues 689–730 are compositionally biased toward low complexity; sequence PAEAEAAPAEGEAAPPAEGEGEAQPAQEGSNSSSSSSDSSSS.

It belongs to the dpy-30 family. In terms of processing, asymmetrically dimethylated at Arg-104, Arg-260, Arg-453, Arg-538 and Arg-615 during flagellum resorption. Probably methylated by PRMT1.

It is found in the cytoplasm. The protein resides in the cytoskeleton. It localises to the flagellum axoneme. Flagellar radial spokes contribute to the regulation of dynein arm activity and thus the pattern of flagellar bending. They consist of a thin stalk, which is attached to the a subfiber of the outer doublet microtubule, and a bulbous head, which is attached to the stalk and appears to interact with the projections from the central pair of microtubules. Binds calmodulin in a calcium-dependent manner. In Chlamydomonas reinhardtii (Chlamydomonas smithii), this protein is Flagellar radial spoke protein 2.